Here is a 482-residue protein sequence, read N- to C-terminus: Methylenetetrahydrofolate--tRNA-(uracil-5-)-methyltransferase TrmFO (482 aa).

11–16 is a binding site for FAD; the sequence is GAGLAG.

This sequence belongs to the MnmG family. TrmFO subfamily. FAD serves as cofactor.

Its subcellular location is the cytoplasm. It carries out the reaction uridine(54) in tRNA + (6R)-5,10-methylene-5,6,7,8-tetrahydrofolate + NADH + H(+) = 5-methyluridine(54) in tRNA + (6S)-5,6,7,8-tetrahydrofolate + NAD(+). It catalyses the reaction uridine(54) in tRNA + (6R)-5,10-methylene-5,6,7,8-tetrahydrofolate + NADPH + H(+) = 5-methyluridine(54) in tRNA + (6S)-5,6,7,8-tetrahydrofolate + NADP(+). Functionally, catalyzes the folate-dependent formation of 5-methyl-uridine at position 54 (M-5-U54) in all tRNAs. The polypeptide is Methylenetetrahydrofolate--tRNA-(uracil-5-)-methyltransferase TrmFO (Nitratidesulfovibrio vulgaris (strain DP4) (Desulfovibrio vulgaris)).